The following is a 372-amino-acid chain: Mitogen-activated protein kinase spk1 (372 aa).

A compositionally biased stretch (polar residues) spans 1-25 (MASATSTPTIADGNSNKESVATSRS). Residues 1–29 (MASATSTPTIADGNSNKESVATSRSPHTH) are disordered. Residues 39 to 327 (YEMINLIGQG…AEEALKHPYV (289 aa)) enclose the Protein kinase domain. ATP-binding positions include 45–53 (IGQGAYGVV) and Lys-68. Asp-163 acts as the Proton acceptor in catalysis. Residue Thr-199 is modified to Phosphothreonine. Residues 199 to 201 (TEY) carry the TXY motif. Position 201 is a phosphotyrosine (Tyr-201).

This sequence belongs to the protein kinase superfamily. CMGC Ser/Thr protein kinase family. MAP kinase subfamily. Requires Mg(2+) as cofactor. Post-translationally, dually phosphorylated on Thr-199 and Tyr-201, which activates the enzyme.

It is found in the nucleus. The catalysed reaction is L-seryl-[protein] + ATP = O-phospho-L-seryl-[protein] + ADP + H(+). It carries out the reaction L-threonyl-[protein] + ATP = O-phospho-L-threonyl-[protein] + ADP + H(+). Its activity is regulated as follows. Activated by tyrosine and threonine phosphorylation. Functionally, involved in mating signal transduction pathway. This is Mitogen-activated protein kinase spk1 (spk1) from Schizosaccharomyces pombe (strain 972 / ATCC 24843) (Fission yeast).